The sequence spans 41 residues: Large ribosomal subunit protein bL36 (41 aa).

It belongs to the bacterial ribosomal protein bL36 family.

The polypeptide is Large ribosomal subunit protein bL36 (Nitrobacter hamburgensis (strain DSM 10229 / NCIMB 13809 / X14)).